The following is a 145-amino-acid chain: D-aminoacyl-tRNA deacylase (145 aa).

The Gly-cisPro motif, important for rejection of L-amino acids signature appears at 137–138 (GP).

The protein belongs to the DTD family. In terms of assembly, homodimer.

It is found in the cytoplasm. The catalysed reaction is glycyl-tRNA(Ala) + H2O = tRNA(Ala) + glycine + H(+). It carries out the reaction a D-aminoacyl-tRNA + H2O = a tRNA + a D-alpha-amino acid + H(+). An aminoacyl-tRNA editing enzyme that deacylates mischarged D-aminoacyl-tRNAs. Also deacylates mischarged glycyl-tRNA(Ala), protecting cells against glycine mischarging by AlaRS. Acts via tRNA-based rather than protein-based catalysis; rejects L-amino acids rather than detecting D-amino acids in the active site. By recycling D-aminoacyl-tRNA to D-amino acids and free tRNA molecules, this enzyme counteracts the toxicity associated with the formation of D-aminoacyl-tRNA entities in vivo and helps enforce protein L-homochirality. This Lactobacillus gasseri (strain ATCC 33323 / DSM 20243 / BCRC 14619 / CIP 102991 / JCM 1131 / KCTC 3163 / NCIMB 11718 / NCTC 13722 / AM63) protein is D-aminoacyl-tRNA deacylase.